The sequence spans 342 residues: Heat-inducible transcription repressor HrcA (342 aa).

This sequence belongs to the HrcA family.

In terms of biological role, negative regulator of class I heat shock genes (grpE-dnaK-dnaJ and groELS operons). Prevents heat-shock induction of these operons. In Leptospira interrogans serogroup Icterohaemorrhagiae serovar copenhageni (strain Fiocruz L1-130), this protein is Heat-inducible transcription repressor HrcA.